Here is a 285-residue protein sequence, read N- to C-terminus: 2-dehydro-3-deoxyphosphooctonate aldolase (285 aa).

It belongs to the KdsA family.

It is found in the cytoplasm. It carries out the reaction D-arabinose 5-phosphate + phosphoenolpyruvate + H2O = 3-deoxy-alpha-D-manno-2-octulosonate-8-phosphate + phosphate. Its pathway is carbohydrate biosynthesis; 3-deoxy-D-manno-octulosonate biosynthesis; 3-deoxy-D-manno-octulosonate from D-ribulose 5-phosphate: step 2/3. It functions in the pathway bacterial outer membrane biogenesis; lipopolysaccharide biosynthesis. The sequence is that of 2-dehydro-3-deoxyphosphooctonate aldolase from Paracidovorax citrulli (strain AAC00-1) (Acidovorax citrulli).